A 1087-amino-acid chain; its full sequence is Ubiquitin-associated protein 2-like (1087 aa).

Met1 carries the post-translational modification N-acetylmethionine. The interval 1 to 33 is disordered; it reads MMTSVGTNRARGNWEQPQNQNQTQHKQRPQATA. The region spanning 49 to 89 is the UBA domain; it reads DFEEKVKQLIDITGKNQDECVIALHDCNGDVNRAINVLLEG. Residues 92 to 234 are disordered; sequence DTHSWEMVGK…TGHFEPDDGT (143 aa). Positions 118–132 are enriched in basic and acidic residues; sequence EEGKENRDRDRDYSR. A compositionally biased stretch (basic residues) spans 133 to 145; it reads RRGGPPRRGRGAS. Residues Arg187 and Arg190 each carry the asymmetric dimethylarginine modification. The span at 213–226 shows a compositional bias: low complexity; the sequence is NYGNSSGNTWNNTG. Ser356 and Ser360 each carry phosphoserine. Residues 377-389 are compositionally biased toward low complexity; the sequence is AQHSQSGSTTTSS. The interval 377–420 is disordered; it reads AQHSQSGSTTTSSWDMGSTTQSPSLVQYDLKNPSDSAVHSPFTK. Polar residues predominate over residues 390-401; that stretch reads WDMGSTTQSPSL. Phosphoserine is present on residues Ser410 and Ser416. Thr425 is subject to Phosphothreonine. Phosphoserine occurs at positions 439, 454, 467, 470, 471, and 477. Disordered stretches follow at residues 440-493, 530-656, and 669-794; these read PAVA…KKAS, SDYE…IPPL, and TNQH…LPPG. Low complexity-rich tracts occupy residues 474–485 and 534–569; these read QSSSPQPAQQKL and STPT…SQES. Positions 570-656 are enriched in polar residues; the sequence is GYQSGPIQST…SPSTSSIPPL (87 aa). Phosphoserine occurs at positions 604, 605, 608, and 609. A compositionally biased stretch (low complexity) spans 688-784; the sequence is TTTTQHSSTL…STRSSVATTS (97 aa). Ser852 and Ser859 each carry phosphoserine. The segment at 865-901 is disordered; that stretch reads FGRGDASSPAPATTLAQPQQNQTQTHHTTQQTFLNPA. Low complexity predominate over residues 873-896; sequence PAPATTLAQPQQNQTQTHHTTQQT. An omega-N-methylarginine mark is found at Ser962 and Val969. N6-acetyllysine occurs at positions 969 and 976. The interval 1040–1087 is disordered; that stretch reads QQPHSQILHHHLQQDGQTGSGQRSQTSSIPQKPQTNKSAYNSYSWGAN. Residues 1053–1067 are compositionally biased toward low complexity; sequence QDGQTGSGQRSQTSS. Polar residues predominate over residues 1068–1087; that stretch reads IPQKPQTNKSAYNSYSWGAN.

In terms of assembly, interacts with BMI1. Part of a complex consisting of UBAP2L, BMI1 and RNF2. Interacts with G3BP1 (via NTF2 domain); promoting stress granule formation. In terms of processing, acetylated. In terms of tissue distribution, ubiquitous.

The protein localises to the nucleus. It is found in the chromosome. It localises to the cytoplasm. The protein resides in the stress granule. Recruits the ubiquitination machinery to RNA polymerase II for polyubiquitination, removal and degradation, when the transcription-coupled nucleotide excision repair (TC-NER) machinery fails to resolve DNA damage. Plays an important role in the activity of long-term repopulating hematopoietic stem cells (LT-HSCs). Is a regulator of stress granule assembly, required for their efficient formation. Required for proper brain development and neocortex lamination. The sequence is that of Ubiquitin-associated protein 2-like from Homo sapiens (Human).